Here is a 428-residue protein sequence, read N- to C-terminus: Phosphomethylpyrimidine synthase 2 (428 aa).

Substrate is bound by residues Met94, Tyr123, His162, Ser184–Gly186, Asn225–Arg228, and Glu264. His268 contacts Zn(2+). A substrate-binding site is contributed by Tyr291. His332 is a binding site for Zn(2+). [4Fe-4S] cluster contacts are provided by Cys408, Cys411, and Cys415.

Belongs to the ThiC family. Requires [4Fe-4S] cluster as cofactor.

It catalyses the reaction 5-amino-1-(5-phospho-beta-D-ribosyl)imidazole + S-adenosyl-L-methionine = 4-amino-2-methyl-5-(phosphooxymethyl)pyrimidine + CO + 5'-deoxyadenosine + formate + L-methionine + 3 H(+). The protein operates within cofactor biosynthesis; thiamine diphosphate biosynthesis. In terms of biological role, catalyzes the synthesis of the hydroxymethylpyrimidine phosphate (HMP-P) moiety of thiamine from aminoimidazole ribotide (AIR) in a radical S-adenosyl-L-methionine (SAM)-dependent reaction. The protein is Phosphomethylpyrimidine synthase 2 of Methanosarcina acetivorans (strain ATCC 35395 / DSM 2834 / JCM 12185 / C2A).